We begin with the raw amino-acid sequence, 330 residues long: Flotillin-like protein FloA (330 aa).

2 helical membrane passes run 6–26 (LLLFVIIAAGLIVLSIFFTFV) and 28–48 (VMLWISALAAGVRVSIFTLVG).

The protein belongs to the flotillin-like FloA family. Homooligomerizes.

The protein resides in the cell membrane. The protein localises to the membrane raft. Functionally, found in functional membrane microdomains (FMM) that may be equivalent to eukaryotic membrane rafts. FMMs are highly dynamic and increase in number as cells age. Flotillins are thought to be important factors in membrane fluidity. In Bacillus pumilus (strain SAFR-032), this protein is Flotillin-like protein FloA.